The chain runs to 272 residues: Eukaryotic translation initiation factor 4E homolog (272 aa).

The segment at 249 to 272 is disordered; the sequence is GKLNSGRKPSNTRGGFSSFGNKRY. Residues 255–272 show a composition bias toward polar residues; it reads RKPSNTRGGFSSFGNKRY.

This sequence belongs to the eukaryotic initiation factor 4E family.

In terms of biological role, recognizes and binds the 7-methylguanosine-containing mRNA cap during an early step in the initiation of protein synthesis and facilitates ribosome binding by inducing the unwinding of the mRNAs secondary structures. This is Eukaryotic translation initiation factor 4E homolog from Acanthamoeba polyphaga mimivirus (APMV).